A 129-amino-acid chain; its full sequence is Small ribosomal subunit protein uS11 (129 aa).

Belongs to the universal ribosomal protein uS11 family. In terms of assembly, part of the 30S ribosomal subunit. Interacts with proteins S7 and S18. Binds to IF-3.

Its function is as follows. Located on the platform of the 30S subunit, it bridges several disparate RNA helices of the 16S rRNA. Forms part of the Shine-Dalgarno cleft in the 70S ribosome. This chain is Small ribosomal subunit protein uS11, found in Dechloromonas aromatica (strain RCB).